A 376-amino-acid chain; its full sequence is Carbapenem antibiotics biosynthesis protein CarD (376 aa).

Belongs to the proline oxidase family.

Its pathway is antibiotic biosynthesis; carbapenem biosynthesis. This Pectobacterium carotovorum subsp. carotovorum (Erwinia carotovora subsp. carotovora) protein is Carbapenem antibiotics biosynthesis protein CarD (carD).